A 219-amino-acid chain; its full sequence is Probable GTP-binding protein EngB (219 aa).

The EngB-type G domain occupies 24–207; the sequence is VQPEIAFAGR…HELIESWLRP (184 aa). Residues 32 to 39, 59 to 63, 81 to 84, 148 to 151, and 186 to 188 contribute to the GTP site; these read GRSNAGKS, GRTQH, DLPG, TKCD, and FSA. Serine 39 and threonine 61 together coordinate Mg(2+).

The protein belongs to the TRAFAC class TrmE-Era-EngA-EngB-Septin-like GTPase superfamily. EngB GTPase family. It depends on Mg(2+) as a cofactor.

Functionally, necessary for normal cell division and for the maintenance of normal septation. The sequence is that of Probable GTP-binding protein EngB from Burkholderia cenocepacia (strain HI2424).